Reading from the N-terminus, the 239-residue chain is MQLQKQDLLYKGKAKSVYETENSDYLILHFRDDTSAFNGERIEQLGRKGQVNNRFNAFIMQKLAEAGIETHFEKQLSDDEVLVKRLEMIPVECVVRNFAAGSLVRRLGLEEGQPLTPPTYELFFKDDALGDPMVNESLSVSLGWATPEQLAKMKELTFKVNDVLKELFDAGGLMLVDFKLEFGVFQDRIVLGDEFSPDGCRIWDKETKKKLDKDRFRQSLGDVIESYEEVAQRIGVPMN.

It belongs to the SAICAR synthetase family.

The catalysed reaction is 5-amino-1-(5-phospho-D-ribosyl)imidazole-4-carboxylate + L-aspartate + ATP = (2S)-2-[5-amino-1-(5-phospho-beta-D-ribosyl)imidazole-4-carboxamido]succinate + ADP + phosphate + 2 H(+). It participates in purine metabolism; IMP biosynthesis via de novo pathway; 5-amino-1-(5-phospho-D-ribosyl)imidazole-4-carboxamide from 5-amino-1-(5-phospho-D-ribosyl)imidazole-4-carboxylate: step 1/2. The sequence is that of Phosphoribosylaminoimidazole-succinocarboxamide synthase from Psychrobacter sp. (strain PRwf-1).